A 501-amino-acid chain; its full sequence is ATP synthase subunit alpha (501 aa).

Position 169-176 (Gly-169–Thr-176) interacts with ATP.

It belongs to the ATPase alpha/beta chains family. In terms of assembly, F-type ATPases have 2 components, CF(1) - the catalytic core - and CF(0) - the membrane proton channel. CF(1) has five subunits: alpha(3), beta(3), gamma(1), delta(1), epsilon(1). CF(0) has three main subunits: a(1), b(2) and c(9-12). The alpha and beta chains form an alternating ring which encloses part of the gamma chain. CF(1) is attached to CF(0) by a central stalk formed by the gamma and epsilon chains, while a peripheral stalk is formed by the delta and b chains.

Its subcellular location is the cell membrane. The catalysed reaction is ATP + H2O + 4 H(+)(in) = ADP + phosphate + 5 H(+)(out). Functionally, produces ATP from ADP in the presence of a proton gradient across the membrane. The alpha chain is a regulatory subunit. The protein is ATP synthase subunit alpha of Streptococcus thermophilus (strain CNRZ 1066).